Consider the following 477-residue polypeptide: Bifunctional protein HldE (477 aa).

A ribokinase region spans residues M1–T318. The residue at position 179 (K179) is an N6-acetyllysine. Position 195 to 198 (N195 to E198) interacts with ATP. D264 is a catalytic residue. Positions M344–G477 are cytidylyltransferase.

The protein in the N-terminal section; belongs to the carbohydrate kinase PfkB family. In the C-terminal section; belongs to the cytidylyltransferase family. As to quaternary structure, homodimer.

It carries out the reaction D-glycero-beta-D-manno-heptose 7-phosphate + ATP = D-glycero-beta-D-manno-heptose 1,7-bisphosphate + ADP + H(+). The catalysed reaction is D-glycero-beta-D-manno-heptose 1-phosphate + ATP + H(+) = ADP-D-glycero-beta-D-manno-heptose + diphosphate. It functions in the pathway nucleotide-sugar biosynthesis; ADP-L-glycero-beta-D-manno-heptose biosynthesis; ADP-L-glycero-beta-D-manno-heptose from D-glycero-beta-D-manno-heptose 7-phosphate: step 1/4. It participates in nucleotide-sugar biosynthesis; ADP-L-glycero-beta-D-manno-heptose biosynthesis; ADP-L-glycero-beta-D-manno-heptose from D-glycero-beta-D-manno-heptose 7-phosphate: step 3/4. Its function is as follows. Catalyzes the phosphorylation of D-glycero-D-manno-heptose 7-phosphate at the C-1 position to selectively form D-glycero-beta-D-manno-heptose-1,7-bisphosphate. In terms of biological role, catalyzes the ADP transfer from ATP to D-glycero-beta-D-manno-heptose 1-phosphate, yielding ADP-D-glycero-beta-D-manno-heptose. This Escherichia coli O17:K52:H18 (strain UMN026 / ExPEC) protein is Bifunctional protein HldE.